The chain runs to 174 residues: Peptide deformylase (174 aa).

Fe cation contacts are provided by Cys-96 and His-138. Residue Glu-139 is part of the active site. Residue His-142 coordinates Fe cation.

It belongs to the polypeptide deformylase family. It depends on Fe(2+) as a cofactor.

It carries out the reaction N-terminal N-formyl-L-methionyl-[peptide] + H2O = N-terminal L-methionyl-[peptide] + formate. In terms of biological role, removes the formyl group from the N-terminal Met of newly synthesized proteins. Requires at least a dipeptide for an efficient rate of reaction. N-terminal L-methionine is a prerequisite for activity but the enzyme has broad specificity at other positions. The chain is Peptide deformylase from Helicobacter pylori (strain P12).